The sequence spans 249 residues: Probable transcriptional regulatory protein LBJ_0543 (249 aa).

The protein belongs to the TACO1 family.

The protein localises to the cytoplasm. This Leptospira borgpetersenii serovar Hardjo-bovis (strain JB197) protein is Probable transcriptional regulatory protein LBJ_0543.